Consider the following 171-residue polypeptide: MQCPHCQHTDSRVLESRSSENGQSIRRRRECLQCKYRFTTYERIEFVPITVIKKDGKRESFDRCKLLRGIVRACEKTGIPPSRLEAIVNDIESRLQQDSKREVTSQEIGQLVLEYLRQESEVAYVRFASVYGNFQGIRDFIAALALLQSSEIERAHPSWSQVEEASVITSS.

The segment at 1–21 is disordered; the sequence is MQCPHCQHTDSRVLESRSSEN. A zinc finger lies at 3-34; it reads CPHCQHTDSRVLESRSSENGQSIRRRRECLQC. The segment covering 7–18 has biased composition (basic and acidic residues); the sequence is QHTDSRVLESRS. Positions 49 to 139 constitute an ATP-cone domain; the sequence is ITVIKKDGKR…VYGNFQGIRD (91 aa).

This sequence belongs to the NrdR family. Zn(2+) is required as a cofactor.

In terms of biological role, negatively regulates transcription of bacterial ribonucleotide reductase nrd genes and operons by binding to NrdR-boxes. The polypeptide is Transcriptional repressor NrdR (Microcystis aeruginosa (strain NIES-843 / IAM M-2473)).